The following is a 202-amino-acid chain: V-type proton ATPase subunit E (202 aa).

Belongs to the V-ATPase E subunit family.

Produces ATP from ADP in the presence of a proton gradient across the membrane. This Halothermothrix orenii (strain H 168 / OCM 544 / DSM 9562) protein is V-type proton ATPase subunit E.